A 396-amino-acid chain; its full sequence is MELPRLENVDLSGKRVFLRVDFNVPVENGKVTDKTRIEKTLPTIELLIKKGARIIIASHLGRPKGQVNPEFSLAPVVETFQSLVKSKVYFSKTVIGEDAIKLSKELKNGEILVIENVRFHKEEEENDPGFSKKLSALADIYVNDAFGAAHRAHSSTEGIARLLPAYAGLLMHKEILELSALLHKPARPFVAIIGGSKVSTKIKVLTNLFDKVNHLLIGGGMAYTFLKSRAIPIGNSLVEKEFEVQAFQLIEKAGVAGIDLQLPVDHIIGDQFNEKAKTKSVDKMGILDGWMGMDIGSKTVSNYEKIIKNAGTIFWNGPMGVFEMDKFASGTMAIAKAVAKSKAKTVVGGGDSIAAINKAGVADKITHISTGGGASLEFMEGRKLPGVEALKKKTSE.

Substrate is bound by residues 21–23 (DFN), Arg-36, 59–62 (HLGR), Arg-118, and Arg-151. ATP is bound by residues Lys-201, Gly-292, Glu-323, and 349 to 352 (GGDS).

This sequence belongs to the phosphoglycerate kinase family. In terms of assembly, monomer.

Its subcellular location is the cytoplasm. It catalyses the reaction (2R)-3-phosphoglycerate + ATP = (2R)-3-phospho-glyceroyl phosphate + ADP. It functions in the pathway carbohydrate degradation; glycolysis; pyruvate from D-glyceraldehyde 3-phosphate: step 2/5. This is Phosphoglycerate kinase from Leptospira interrogans serogroup Icterohaemorrhagiae serovar Lai (strain 56601).